A 478-amino-acid chain; its full sequence is Protein nucleotidyltransferase YdiU (478 aa).

ATP-binding residues include glycine 84, glycine 86, arginine 87, lysine 107, aspartate 119, glycine 120, arginine 170, and arginine 177. Aspartate 246 functions as the Proton acceptor in the catalytic mechanism. Asparagine 247 and aspartate 256 together coordinate Mg(2+). Aspartate 256 contributes to the ATP binding site.

This sequence belongs to the SELO family. The cofactor is Mg(2+). It depends on Mn(2+) as a cofactor.

The catalysed reaction is L-seryl-[protein] + ATP = 3-O-(5'-adenylyl)-L-seryl-[protein] + diphosphate. The enzyme catalyses L-threonyl-[protein] + ATP = 3-O-(5'-adenylyl)-L-threonyl-[protein] + diphosphate. It catalyses the reaction L-tyrosyl-[protein] + ATP = O-(5'-adenylyl)-L-tyrosyl-[protein] + diphosphate. It carries out the reaction L-histidyl-[protein] + UTP = N(tele)-(5'-uridylyl)-L-histidyl-[protein] + diphosphate. The catalysed reaction is L-seryl-[protein] + UTP = O-(5'-uridylyl)-L-seryl-[protein] + diphosphate. The enzyme catalyses L-tyrosyl-[protein] + UTP = O-(5'-uridylyl)-L-tyrosyl-[protein] + diphosphate. Its function is as follows. Nucleotidyltransferase involved in the post-translational modification of proteins. It can catalyze the addition of adenosine monophosphate (AMP) or uridine monophosphate (UMP) to a protein, resulting in modifications known as AMPylation and UMPylation. The protein is Protein nucleotidyltransferase YdiU of Escherichia coli O127:H6 (strain E2348/69 / EPEC).